The sequence spans 409 residues: Magnesium-protoporphyrin IX monomethyl ester [oxidative] cyclase, chloroplastic (409 aa).

2 disordered regions span residues methionine 1 to serine 23 and arginine 36 to glutamate 60. The N-terminal 36 residues, methionine 1–arginine 36, are a transit peptide targeting the chloroplast. Residues lysine 13–serine 23 are compositionally biased toward polar residues.

The protein belongs to the AcsF family. Part of the FLU-containing chloroplast membrane complex composed of FLU, CRD1, PORB, PORC, CHLP and HEMA1. Interacts with YCF54 in chloroplasts. It depends on Fe cation as a cofactor.

Its subcellular location is the plastid. It is found in the chloroplast inner membrane. It localises to the chloroplast thylakoid membrane. The catalysed reaction is Mg-protoporphyrin IX 13-monomethyl ester + 3 NADPH + 3 O2 + 2 H(+) = 3,8-divinyl protochlorophyllide a + 3 NADP(+) + 5 H2O. It functions in the pathway porphyrin-containing compound metabolism; chlorophyll biosynthesis. Functionally, catalytic component of the MgProto monomethylester (MgProtoME) cyclase complex that catalyzes the formation of the isocyclic ring in chlorophyll biosynthesis. Mediates the cyclase reaction, which results in the formation of divinylprotochlorophyllide (Pchlide) characteristic of all chlorophylls from magnesium-protoporphyrin IX 13-monomethyl ester (MgPMME). This is Magnesium-protoporphyrin IX monomethyl ester [oxidative] cyclase, chloroplastic from Arabidopsis thaliana (Mouse-ear cress).